The following is a 106-amino-acid chain: MVNIPKTRRTYCKGKACRKHTPHKVTQYKKGKDSLSAQGKRRYDRKQSGYGGQTKPVFHKKAKTTKKVVLRLECTVCKTKHQLALKRCKHFELGGDKKQRGAAISF.

Residues M1–K29 show a composition bias toward basic residues. The disordered stretch occupies residues M1–P56.

The protein belongs to the eukaryotic ribosomal protein eL42 family.

The polypeptide is Large ribosomal subunit protein eL42 (RPL44) (Cryptococcus neoformans var. neoformans serotype D (strain B-3501A) (Filobasidiella neoformans)).